The following is a 567-amino-acid chain: Structural protein ORF567 (567 aa).

The disordered stretch occupies residues 7 to 393 (INALLGFPEE…MPIEHKPEQQ (387 aa)). Residues 65-79 (TPTPIRPAPPPPPPI) are compositionally biased toward pro residues. The span at 180–200 (PKREPEHHTHGSTNNEHESKR) shows a compositional bias: basic and acidic residues. The span at 219–231 (THQTSPSHSSGGT) shows a compositional bias: low complexity. 2 stretches are compositionally biased toward pro residues: residues 253-278 (MPIP…PTPP) and 285-299 (TPTP…PPPT). Low complexity predominate over residues 300–312 (HGSSSTNSSGSTN). The span at 319 to 335 (PKPIPIPPTPPPPPPHH) shows a compositional bias: pro residues. The segment covering 343-353 (PKHESEHHDHG) has biased composition (basic and acidic residues). Over residues 354–372 (SSSTNSSSSTSNSSSGGTN) the composition is skewed to low complexity.

The protein localises to the virion. The polypeptide is Structural protein ORF567 (Acidianus two-tailed virus (ATV)).